A 240-amino-acid chain; its full sequence is Probable transcriptional regulator ycf27 (240 aa).

Positions 5-118 (KILVIDDEAS…ELEARIRSVL (114 aa)) constitute a Response regulatory domain. Residue aspartate 54 is modified to 4-aspartylphosphate. Residues 74–92 (DVPIIMLTALSDVSDRITG) constitute a DNA-binding region (H-T-H motif). The segment at residues 133–234 (SGIINIGFLK…ARGTGYLFQR (102 aa)) is a DNA-binding region (ompR/PhoB-type).

The protein localises to the plastid. It is found in the chloroplast. In terms of biological role, probable promoter-specific protein mediating the interaction between DNA and RNA polymerase. The protein is Probable transcriptional regulator ycf27 (ycf27) of Porphyridium aerugineum (Red microalga).